The primary structure comprises 287 residues: 4-hydroxybenzoate octaprenyltransferase (287 aa).

9 helical membrane passes run 22 to 42 (IGTLLLLWPTLWALWIAAQGF), 45 to 65 (LGVLIVFSAGVFLMRSAGCVI), 91 to 111 (TSTEAIILFFILAIVSFLLVL), 114 to 134 (NSLTIQLSFAGLLLAFAYPFM), 139 to 159 (QLPQLVLGLAFSWSIPMAFAA), 161 to 181 (ANALPAVVWIIFAVNIIWTIA), 212 to 232 (IIIALLQLTSLILLSLLGWLE), 236 to 256 (WIYFIALLVVGGLFLRQQLQI), and 267 to 287 (AFLDNNYVGFVIFAGLFLGYL).

It belongs to the UbiA prenyltransferase family. Mg(2+) serves as cofactor.

It localises to the cell inner membrane. It carries out the reaction all-trans-octaprenyl diphosphate + 4-hydroxybenzoate = 4-hydroxy-3-(all-trans-octaprenyl)benzoate + diphosphate. It participates in cofactor biosynthesis; ubiquinone biosynthesis. Catalyzes the prenylation of para-hydroxybenzoate (PHB) with an all-trans polyprenyl group. Mediates the second step in the final reaction sequence of ubiquinone-8 (UQ-8) biosynthesis, which is the condensation of the polyisoprenoid side chain with PHB, generating the first membrane-bound Q intermediate 3-octaprenyl-4-hydroxybenzoate. The protein is 4-hydroxybenzoate octaprenyltransferase of Psychromonas ingrahamii (strain DSM 17664 / CCUG 51855 / 37).